A 123-amino-acid polypeptide reads, in one-letter code: UPF0231 protein PMI2039 (123 aa).

This sequence belongs to the UPF0231 family.

This Proteus mirabilis (strain HI4320) protein is UPF0231 protein PMI2039.